A 914-amino-acid chain; its full sequence is Isoleucine--tRNA ligase (914 aa).

The 'HIGH' region signature appears at 64–74 (PYANGNFHLGH). Position 557 (Glu-557) interacts with L-isoleucyl-5'-AMP. The 'KMSKS' region signature appears at 598 to 602 (PMSKS). Residue Lys-601 coordinates ATP. Zn(2+) contacts are provided by Cys-889, Cys-892, Cys-906, and Cys-909.

It belongs to the class-I aminoacyl-tRNA synthetase family. IleS type 1 subfamily. As to quaternary structure, monomer. The cofactor is Zn(2+).

It localises to the cytoplasm. It carries out the reaction tRNA(Ile) + L-isoleucine + ATP = L-isoleucyl-tRNA(Ile) + AMP + diphosphate. In terms of biological role, catalyzes the attachment of isoleucine to tRNA(Ile). As IleRS can inadvertently accommodate and process structurally similar amino acids such as valine, to avoid such errors it has two additional distinct tRNA(Ile)-dependent editing activities. One activity is designated as 'pretransfer' editing and involves the hydrolysis of activated Val-AMP. The other activity is designated 'posttransfer' editing and involves deacylation of mischarged Val-tRNA(Ile). This Leptospira interrogans serogroup Icterohaemorrhagiae serovar Lai (strain 56601) protein is Isoleucine--tRNA ligase.